Consider the following 364-residue polypeptide: Probable endopolygalacturonase B (364 aa).

A signal peptide spans 1-20; that stretch reads MHFFQSSLVAATMGAALVAA. A propeptide spanning residues 21 to 29 is cleaved from the precursor; that stretch reads APAADLETR. A disulfide bridge links cysteine 32 with cysteine 47. N-linked (GlcNAc...) asparagine glycans are attached at residues asparagine 138 and asparagine 141. PbH1 repeat units follow at residues 159-188, 189-210, 211-231, 240-261, 269-291, and 303-324; these read SDHLTIKDVLLDNSAGTKLGHNTDAFDVGS, STYITIDGATVYNQDDCLAVNS, GEHITFTNGYCNGGHGLSIGS, VNDVTISNSQVINSQNGARIKT, VTGVKFQDISLKGITKYGIVVQQ, and TNGVKVSDITFEKVTGTVTSSA. Aspartate 203 acts as the Proton donor in catalysis. A disulfide bond links cysteine 205 and cysteine 221. Histidine 225 is an active-site residue. A disulfide bridge links cysteine 331 with cysteine 336. The N-linked (GlcNAc...) asparagine glycan is linked to asparagine 338. Cysteine 355 and cysteine 364 are disulfide-bonded.

The protein belongs to the glycosyl hydrolase 28 family.

Its subcellular location is the secreted. The enzyme catalyses (1,4-alpha-D-galacturonosyl)n+m + H2O = (1,4-alpha-D-galacturonosyl)n + (1,4-alpha-D-galacturonosyl)m.. In terms of biological role, involved in maceration and soft-rotting of plant tissue. Hydrolyzes the 1,4-alpha glycosidic bonds of de-esterified pectate in the smooth region of the plant cell wall. The polypeptide is Probable endopolygalacturonase B (pgaB) (Aspergillus fumigatus (strain ATCC MYA-4609 / CBS 101355 / FGSC A1100 / Af293) (Neosartorya fumigata)).